The sequence spans 341 residues: Probable UDP-glucuronate 4-epimerase (341 aa).

Catalysis depends on tyrosine 152, which acts as the Proton acceptor.

This sequence belongs to the NAD(P)-dependent epimerase/dehydratase family. The cofactor is NAD(+).

It catalyses the reaction UDP-alpha-D-glucuronate = UDP-alpha-D-galacturonate. The sequence is that of Probable UDP-glucuronate 4-epimerase from Rhizobium meliloti (strain 1021) (Ensifer meliloti).